The following is a 105-amino-acid chain: Large ribosomal subunit protein uL23 (105 aa).

Belongs to the universal ribosomal protein uL23 family. As to quaternary structure, part of the 50S ribosomal subunit. Contacts protein L29, and trigger factor when it is bound to the ribosome.

In terms of biological role, one of the early assembly proteins it binds 23S rRNA. One of the proteins that surrounds the polypeptide exit tunnel on the outside of the ribosome. Forms the main docking site for trigger factor binding to the ribosome. The protein is Large ribosomal subunit protein uL23 of Chloroherpeton thalassium (strain ATCC 35110 / GB-78).